The sequence spans 271 residues: Shikimate kinase (271 aa).

83-93 (PIAMGLKSSSA) serves as a coordination point for ATP.

Belongs to the GHMP kinase family. Archaeal shikimate kinase subfamily.

The protein resides in the cytoplasm. The enzyme catalyses shikimate + ATP = 3-phosphoshikimate + ADP + H(+). Its pathway is metabolic intermediate biosynthesis; chorismate biosynthesis; chorismate from D-erythrose 4-phosphate and phosphoenolpyruvate: step 5/7. The sequence is that of Shikimate kinase from Thermococcus kodakarensis (strain ATCC BAA-918 / JCM 12380 / KOD1) (Pyrococcus kodakaraensis (strain KOD1)).